The following is a 100-amino-acid chain: Small ribosomal subunit protein uS14c (100 aa).

Belongs to the universal ribosomal protein uS14 family. In terms of assembly, part of the 30S ribosomal subunit.

The protein resides in the plastid. Its function is as follows. Binds 16S rRNA, required for the assembly of 30S particles. The protein is Small ribosomal subunit protein uS14c of Cuscuta obtusiflora (Peruvian dodder).